The chain runs to 210 residues: Na(+)-translocating NADH-quinone reductase subunit D (210 aa).

6 helical membrane passes run 42-62 (VVMT…ISTI), 66-86 (IPNS…VIVV), 103-123 (VYVG…AFAM), 131-151 (FMDG…VGAF), 154-174 (LFGS…NGGW), and 178-198 (NGLL…IWAV).

It belongs to the NqrDE/RnfAE family. In terms of assembly, composed of six subunits; NqrA, NqrB, NqrC, NqrD, NqrE and NqrF.

The protein localises to the cell inner membrane. It carries out the reaction a ubiquinone + n Na(+)(in) + NADH + H(+) = a ubiquinol + n Na(+)(out) + NAD(+). Its function is as follows. NQR complex catalyzes the reduction of ubiquinone-1 to ubiquinol by two successive reactions, coupled with the transport of Na(+) ions from the cytoplasm to the periplasm. NqrA to NqrE are probably involved in the second step, the conversion of ubisemiquinone to ubiquinol. The protein is Na(+)-translocating NADH-quinone reductase subunit D of Psychromonas ingrahamii (strain DSM 17664 / CCUG 51855 / 37).